Reading from the N-terminus, the 378-residue chain is MTYPARAVVDLGAIAGNVARLREVAGPAEVMAVVKGDAYGHGLVPVARAALGAGATWLGVAQLGEALTLRAAGVDARTLTWLYAPGAPLAEALRADLDLSVAAPWALDEVVGAARESGVVARVHLKVDTGMGRSGLFLDEWGGLLDAAVRAQAAGEIDVVGVWSHLASADDAESGLTAEQTRVFAEAVRRAEDAGAHLEVRHLANSAGTLAHAATHFDLVRPGIAVVGLSPFGDRTADELGLTPAMRLEAELTIVKHAPAGQGVSYGHEYTTSEATSLAVVPLGYADGIPRHAGGAGPVQVGDTWSRIAGRVCMDQFVLDLGAGANAHAGDVAVLFGSGADGEPTAADWARAADTITYEIVTRLGPRVPRVHVGGRDA.

K35 serves as the catalytic Proton acceptor; specific for D-alanine. K35 carries the post-translational modification N6-(pyridoxal phosphate)lysine. R133 is a substrate binding site. Y266 acts as the Proton acceptor; specific for L-alanine in catalysis. M314 is a binding site for substrate.

This sequence belongs to the alanine racemase family. It depends on pyridoxal 5'-phosphate as a cofactor.

It catalyses the reaction L-alanine = D-alanine. It functions in the pathway amino-acid biosynthesis; D-alanine biosynthesis; D-alanine from L-alanine: step 1/1. Catalyzes the interconversion of L-alanine and D-alanine. May also act on other amino acids. This is Alanine racemase (alr) from Beutenbergia cavernae (strain ATCC BAA-8 / DSM 12333 / CCUG 43141 / JCM 11478 / NBRC 16432 / NCIMB 13614 / HKI 0122).